A 693-amino-acid polypeptide reads, in one-letter code: Zinc finger protein 441 (693 aa).

Positions 4 to 79 (VAFEDVAINF…ERACEIKDNS (76 aa)) constitute a KRAB domain. A C2H2-type 1 zinc finger spans residues 169–190 (YDCKECASFSSLENLQRHMAAH). A C2H2-type 2; degenerate zinc finger spans residues 196–218 (RICKLCGNAFIWPSLFHMLRRTH). The C2H2-type 3; degenerate zinc finger occupies 224–246 (YEYEQCSTAFPAYSSTLRHERTH). Residues 252-274 (YQCKQCGKAFSCSCYTQLYERTH) form a C2H2-type 4; degenerate zinc finger. 15 consecutive C2H2-type zinc fingers follow at residues 280–302 (YECK…MIVH), 308–330 (HKCK…KRTH), 336–358 (YECK…MITH), 364–386 (HKCK…ETTH), 392–413 (YKCE…ETTH), 419–441 (YKCK…ERIH), 447–469 (YKCK…EKTH), 475–497 (YECK…MIMH), 503–525 (HKCK…ERIH), 531–553 (YKCK…ERTH), 559–581 (YGCQ…MITH), 587–609 (HKCK…ERTH), 615–637 (YECK…ERVH), 643–665 (YKCK…ERTH), and 671–693 (YKCK…EMTH).

This sequence belongs to the krueppel C2H2-type zinc-finger protein family.

The protein localises to the nucleus. Its function is as follows. May be involved in transcriptional regulation. This chain is Zinc finger protein 441 (ZNF441), found in Homo sapiens (Human).